Reading from the N-terminus, the 329-residue chain is Serine/threonine-protein phosphatase PP2A catalytic subunit (329 aa).

The tract at residues 1–25 (MDNNMEIDAARSPEPHHLSPTTDPG) is disordered. Basic and acidic residues predominate over residues 8-17 (DAARSPEPHH). Positions 77, 79, 105, and 137 each coordinate Mn(2+). His-138 acts as the Proton donor in catalysis. Mn(2+) is bound by residues His-187 and His-261. Leu-329 is modified (leucine methyl ester).

This sequence belongs to the PPP phosphatase family. PP-2A subfamily. Mn(2+) serves as cofactor.

It catalyses the reaction O-phospho-L-seryl-[protein] + H2O = L-seryl-[protein] + phosphate. It carries out the reaction O-phospho-L-threonyl-[protein] + H2O = L-threonyl-[protein] + phosphate. Its function is as follows. Involved in hyphal morphogenesis. The protein is Serine/threonine-protein phosphatase PP2A catalytic subunit (pphA) of Emericella nidulans (strain FGSC A4 / ATCC 38163 / CBS 112.46 / NRRL 194 / M139) (Aspergillus nidulans).